The following is a 478-amino-acid chain: Sodium-coupled neutral amino acid transporter 5 (478 aa).

A disordered region spans residues 1–20 (MAISSAEGMELQDPKMNGAL). At 1–57 (MAISSAEGMELQDPKMNGALPGNAVEQEHEGFLPSHSPSPGRKPAQFMDFEGKTSFG) the chain is on the cytoplasmic side. A helical membrane pass occupies residues 58–80 (MSVFNLSNAIMGSGILGLAYAMA). Residues 81-93 (HTGILLFLALLLC) are Extracellular-facing. The helical transmembrane segment at 94–114 (IALLSSYSIHLLLTCAGVVGI) threads the bilayer. Over 115–131 (RAYEQLGQRALGPAGKV) the chain is Cytoplasmic. A helical transmembrane segment spans residues 132–152 (VVAAVICLHNVGAMSSYLFII). Residues 153-172 (KSELPLVIATFLDMDPEGDW) lie on the Extracellular side of the membrane. A helical transmembrane segment spans residues 173 to 193 (FLKGNLLIIIVSVLIILPLAL). Residues 194–198 (MRHLG) lie on the Cytoplasmic side of the membrane. A helical membrane pass occupies residues 199–219 (YLGYTSGLSLTCMLFFLISVI). Residues 220–263 (YKKFQLGCTVGHNGTAVESKSSPSLPIHGLNTSCEAQMFTADSQ) lie on the Extracellular side of the membrane. C227 and C253 form a disulfide bridge. An N-linked (GlcNAc...) asparagine glycan is attached at N232. Residues 264-284 (MFYTVPIMAFAFVCHPEVLPI) traverse the membrane as a helical segment. The Cytoplasmic segment spans residues 285–301 (YTELCRPSKRRMQAVAN). The chain crosses the membrane as a helical span at residues 302–322 (VSIGAMFCMYGLTATFGYLTF). Residues 323–340 (YSSVEAEMLHMYSQHDLL) lie on the Extracellular side of the membrane. Residues 341–361 (ILCVRLAVLLAVTLTVPVVLF) form a helical membrane-spanning segment. The Cytoplasmic segment spans residues 362–382 (PIRRALQQLLFPSKAFSWPRH). A helical transmembrane segment spans residues 383-403 (VAIALILLVLVNVLVICVPTI). Residues 404–405 (RD) lie on the Extracellular side of the membrane. Residues 406–426 (IFGVIGSTSAPSLIFILPSIF) form a helical membrane-spanning segment. Over 427-445 (YLRIVPSEVEPLYSWPKIQ) the chain is Cytoplasmic. Residues 446-466 (ALCFGVLGVLFMAISLGFMFA) form a helical membrane-spanning segment. Over 467 to 478 (NWATGQSHVSGH) the chain is Extracellular.

It belongs to the amino acid/polyamine transporter 2 family.

Its subcellular location is the cell membrane. It carries out the reaction L-serine(out) + Na(+)(out) + H(+)(in) = L-serine(in) + Na(+)(in) + H(+)(out). The enzyme catalyses L-alanine(out) + Na(+)(out) + H(+)(in) = L-alanine(in) + Na(+)(in) + H(+)(out). It catalyses the reaction glycine(out) + Na(+)(out) + H(+)(in) = glycine(in) + Na(+)(in) + H(+)(out). The catalysed reaction is L-glutamine(out) + Na(+)(out) + H(+)(in) = L-glutamine(in) + Na(+)(in) + H(+)(out). It carries out the reaction L-asparagine(out) + Na(+)(out) + H(+)(in) = L-asparagine(in) + Na(+)(in) + H(+)(out). The enzyme catalyses L-histidine(out) + Na(+)(out) + H(+)(in) = L-histidine(in) + Na(+)(in) + H(+)(out). It catalyses the reaction L-cysteine(out) + Na(+)(out) + H(+)(in) = L-cysteine(in) + Na(+)(in) + H(+)(out). Its activity is regulated as follows. Not inhibited by lithium. Partial allosteric regulation on ions sodium binding. Functionally, symporter that cotransports neutral amino acids and sodium ions, coupled to an H(+) antiporter activity. Releases L-glutamine and glycine from astroglial cells and may participate in the glutamate/GABA-glutamine cycle and the NMDA receptors activation. In addition contributes significantly to L-glutamine uptake in retina, namely in ganglion and Mueller cells and, therefore participates in the retinal glutamate-glutamine cycle. The transport activity is pH sensitive, Li(+) tolerant, bidirectional and associated with large uncoupled fluxes of protons. The transport is electroneutral coupled to the cotransport of 1 Na(+) and the antiport of 1 H(+). May have particular importance for modulation of net hepatic glutamine flux. The polypeptide is Sodium-coupled neutral amino acid transporter 5 (Bos taurus (Bovine)).